The following is a 156-amino-acid chain: Peroxisome assembly protein 22 (156 aa).

The helical transmembrane segment at 24 to 46 threads the bilayer; sequence LSIIAVGVLSTVAVTVGYLLYLY.

It belongs to the peroxin-22 family.

The protein localises to the peroxisome membrane. Functionally, involved in peroxisome biogenesis. The polypeptide is Peroxisome assembly protein 22 (PEX22) (Kluyveromyces lactis (strain ATCC 8585 / CBS 2359 / DSM 70799 / NBRC 1267 / NRRL Y-1140 / WM37) (Yeast)).